A 360-amino-acid polypeptide reads, in one-letter code: Putative F-box protein At5g55150 (360 aa).

In terms of domain architecture, F-box spans 6–54 (SSWSEFLPELLNTVFHNLNDARDILNCATVCSSWKDSSSAVYYSRTFSP).

In Arabidopsis thaliana (Mouse-ear cress), this protein is Putative F-box protein At5g55150.